The following is a 211-amino-acid chain: Ferritin heavy chain (211 aa).

The N-terminal stretch at 1 to 20 is a signal peptide; the sequence is MNSILLVFAGILAVCLPASA. The 157-residue stretch at 35–191 folds into the Ferritin-like diiron domain; it reads ITMHRSCRNS…GKASTLKKLM (157 aa). Cysteines 41 and 150 form a disulfide. Positions 52, 87, 90, 136, and 173 each coordinate Fe cation.

The protein belongs to the ferritin family. Oligomer of 12 light (L) chains and 12 heavy (H) chains; L and H chains are disulfide-linked. The functional molecule forms a roughly spherical shell with a diameter of 12 nm and contains a central cavity into which the insoluble ferric iron core is deposited.

It localises to the golgi apparatus. The protein localises to the secreted. It catalyses the reaction 4 Fe(2+) + O2 + 4 H(+) = 4 Fe(3+) + 2 H2O. Functionally, stores iron in a soluble, non-toxic, readily available form. Important for iron homeostasis. Iron is taken up in the ferrous form and deposited as ferric hydroxides after oxidation. Ferritin is composed of a heavy (H) chain which is responsible for the oxidation and uptake of ferrous iron, and a light (L) chain which facilitates the nucleation of the ferrihydrite iron core. In Trichoplusia ni (Cabbage looper), this protein is Ferritin heavy chain.